We begin with the raw amino-acid sequence, 252 residues long: Triosephosphate isomerase (252 aa).

9–11 (NWK) contacts substrate. His-95 (electrophile) is an active-site residue. The Proton acceptor role is filled by Glu-167. Substrate is bound by residues Gly-173, Ser-213, and 234-235 (GG). The residue at position 213 (Ser-213) is a Phosphoserine.

Belongs to the triosephosphate isomerase family. Homodimer.

The protein resides in the cytoplasm. It carries out the reaction D-glyceraldehyde 3-phosphate = dihydroxyacetone phosphate. It functions in the pathway carbohydrate biosynthesis; gluconeogenesis. The protein operates within carbohydrate degradation; glycolysis; D-glyceraldehyde 3-phosphate from glycerone phosphate: step 1/1. Involved in the gluconeogenesis. Catalyzes stereospecifically the conversion of dihydroxyacetone phosphate (DHAP) to D-glyceraldehyde-3-phosphate (G3P). The chain is Triosephosphate isomerase from Oceanobacillus iheyensis (strain DSM 14371 / CIP 107618 / JCM 11309 / KCTC 3954 / HTE831).